Consider the following 130-residue polypeptide: Small ribosomal subunit protein uS11c (130 aa).

Belongs to the universal ribosomal protein uS11 family. In terms of assembly, part of the 30S ribosomal subunit.

Its subcellular location is the plastid. It localises to the chloroplast. This Angiopteris evecta (Mule's foot fern) protein is Small ribosomal subunit protein uS11c.